We begin with the raw amino-acid sequence, 703 residues long: Serotransferrin (703 aa).

A signal peptide spans methionine 1–alanine 19. 2 consecutive Transferrin-like domains span residues valine 27 to glutamate 341 and valine 354 to lysine 686. 2 disulfides stabilise this stretch: cysteine 30/cysteine 65 and cysteine 40/cysteine 56. Positions 80 and 112 each coordinate Fe(3+). 3 cysteine pairs are disulfide-bonded: cysteine 135-cysteine 218, cysteine 180-cysteine 193, and cysteine 246-cysteine 260. Hydrogencarbonate-binding residues include threonine 137, lysine 141, alanine 143, and glycine 144. Tyrosine 212 lines the Fe(3+) pocket. A Fe(3+)-binding site is contributed by histidine 268. The segment at glutamate 341–alanine 350 is connecting region. Intrachain disulfides connect cysteine 357–cysteine 389 and cysteine 367–cysteine 380. Fe(3+) contacts are provided by aspartate 404 and tyrosine 443. Disulfide bonds link cysteine 414–cysteine 698, cysteine 432–cysteine 659, cysteine 466–cysteine 545, cysteine 490–cysteine 687, cysteine 500–cysteine 514, cysteine 511–cysteine 528, and cysteine 585–cysteine 599. Hydrogencarbonate-binding residues include threonine 468, arginine 472, alanine 474, and glycine 475. Fe(3+) is bound at residue tyrosine 539. Histidine 607 contacts Fe(3+).

It belongs to the transferrin family. Monomer. In terms of tissue distribution, plasma.

It is found in the secreted. In terms of biological role, transferrins are iron binding transport proteins which can bind two Fe(3+) ions in association with the binding of an anion, usually bicarbonate. It is responsible for the transport of iron from sites of absorption and heme degradation to those of storage and utilization. Serum transferrin may also have a further role in stimulating cell proliferation. This chain is Serotransferrin (tf), found in Xenopus tropicalis (Western clawed frog).